A 181-amino-acid polypeptide reads, in one-letter code: Ribulose bisphosphate carboxylase small subunit, chloroplastic 2 (181 aa).

The transit peptide at 1 to 57 (MASSVISSAAVATRTNVTQAGSMIAPFTGLKSAATFPVSRKQNLDITSIASNGGRVR) directs the protein to the chloroplast.

This sequence belongs to the RuBisCO small chain family. In terms of assembly, heterohexadecamer of 8 large and 8 small subunits.

It is found in the plastid. It localises to the chloroplast. Functionally, ruBisCO catalyzes two reactions: the carboxylation of D-ribulose 1,5-bisphosphate, the primary event in carbon dioxide fixation, as well as the oxidative fragmentation of the pentose substrate. Both reactions occur simultaneously and in competition at the same active site. Although the small subunit is not catalytic it is essential for maximal activity. This chain is Ribulose bisphosphate carboxylase small subunit, chloroplastic 2, found in Solanum tuberosum (Potato).